A 244-amino-acid polypeptide reads, in one-letter code: Acetylglutamate kinase (244 aa).

Residues 40-41 (GG), Arg62, and Asn155 each bind substrate.

Belongs to the acetylglutamate kinase family. ArgB subfamily.

It localises to the cytoplasm. It carries out the reaction N-acetyl-L-glutamate + ATP = N-acetyl-L-glutamyl 5-phosphate + ADP. It functions in the pathway amino-acid biosynthesis; L-arginine biosynthesis; N(2)-acetyl-L-ornithine from L-glutamate: step 2/4. Its function is as follows. Catalyzes the ATP-dependent phosphorylation of N-acetyl-L-glutamate. In Leuconostoc mesenteroides subsp. mesenteroides (strain ATCC 8293 / DSM 20343 / BCRC 11652 / CCM 1803 / JCM 6124 / NCDO 523 / NBRC 100496 / NCIMB 8023 / NCTC 12954 / NRRL B-1118 / 37Y), this protein is Acetylglutamate kinase.